The chain runs to 277 residues: NADPH-dependent 7-cyano-7-deazaguanine reductase (277 aa).

Position 83–85 (83–85) interacts with substrate; that stretch reads IES. 85-86 serves as a coordination point for NADPH; the sequence is SK. Catalysis depends on Cys-184, which acts as the Thioimide intermediate. Asp-191 (proton donor) is an active-site residue. 223-224 provides a ligand contact to substrate; it reads HE. Residue 252 to 253 participates in NADPH binding; it reads RG.

The protein belongs to the GTP cyclohydrolase I family. QueF type 2 subfamily. As to quaternary structure, homodimer.

It localises to the cytoplasm. The catalysed reaction is 7-aminomethyl-7-carbaguanine + 2 NADP(+) = 7-cyano-7-deazaguanine + 2 NADPH + 3 H(+). The protein operates within tRNA modification; tRNA-queuosine biosynthesis. Its function is as follows. Catalyzes the NADPH-dependent reduction of 7-cyano-7-deazaguanine (preQ0) to 7-aminomethyl-7-deazaguanine (preQ1). The polypeptide is NADPH-dependent 7-cyano-7-deazaguanine reductase (Cupriavidus necator (strain ATCC 17699 / DSM 428 / KCTC 22496 / NCIMB 10442 / H16 / Stanier 337) (Ralstonia eutropha)).